A 445-amino-acid chain; its full sequence is tRNA-2-methylthio-N(6)-dimethylallyladenosine synthase (445 aa).

In terms of domain architecture, MTTase N-terminal spans 3 to 120; sequence RKLFIQTHGC…LPGLITQAAS (118 aa). [4Fe-4S] cluster is bound by residues C12, C49, C83, C157, C161, and C164. The Radical SAM core domain occupies 143 to 375; it reads SVDGPSAFVS…QQRINQNVQD (233 aa). The region spanning 378-442 is the TRAM domain; sequence RKMVGSTQRI…SNSLLGTDPR (65 aa).

It belongs to the methylthiotransferase family. MiaB subfamily. As to quaternary structure, monomer. The cofactor is [4Fe-4S] cluster.

It localises to the cytoplasm. It carries out the reaction N(6)-dimethylallyladenosine(37) in tRNA + (sulfur carrier)-SH + AH2 + 2 S-adenosyl-L-methionine = 2-methylsulfanyl-N(6)-dimethylallyladenosine(37) in tRNA + (sulfur carrier)-H + 5'-deoxyadenosine + L-methionine + A + S-adenosyl-L-homocysteine + 2 H(+). Its function is as follows. Catalyzes the methylthiolation of N6-(dimethylallyl)adenosine (i(6)A), leading to the formation of 2-methylthio-N6-(dimethylallyl)adenosine (ms(2)i(6)A) at position 37 in tRNAs that read codons beginning with uridine. The chain is tRNA-2-methylthio-N(6)-dimethylallyladenosine synthase from Alcanivorax borkumensis (strain ATCC 700651 / DSM 11573 / NCIMB 13689 / SK2).